We begin with the raw amino-acid sequence, 144 residues long: Peptide methionine sulfoxide reductase MsrB (144 aa).

A MsrB domain is found at 5 to 128 (KEELRQRIGE…NSAALQFIPV (124 aa)). Cys117 serves as the catalytic Nucleophile.

It belongs to the MsrB Met sulfoxide reductase family.

The catalysed reaction is L-methionyl-[protein] + [thioredoxin]-disulfide + H2O = L-methionyl-(R)-S-oxide-[protein] + [thioredoxin]-dithiol. The protein is Peptide methionine sulfoxide reductase MsrB of Ligilactobacillus salivarius (strain UCC118) (Lactobacillus salivarius).